A 244-amino-acid chain; its full sequence is Carboxy-S-adenosyl-L-methionine synthase (244 aa).

S-adenosyl-L-methionine-binding positions include Y38, 63 to 65 (GCS), 88 to 89 (DN), 116 to 117 (DI), N131, and R198.

This sequence belongs to the class I-like SAM-binding methyltransferase superfamily. Cx-SAM synthase family. Homodimer.

The enzyme catalyses prephenate + S-adenosyl-L-methionine = carboxy-S-adenosyl-L-methionine + 3-phenylpyruvate + H2O. Its function is as follows. Catalyzes the conversion of S-adenosyl-L-methionine (SAM) to carboxy-S-adenosyl-L-methionine (Cx-SAM). This Haemophilus ducreyi (strain 35000HP / ATCC 700724) protein is Carboxy-S-adenosyl-L-methionine synthase.